Reading from the N-terminus, the 411-residue chain is Carbamoyl phosphate synthase arginine-specific small chain (411 aa).

L-glutamine is bound by residues Ser50, Gly232, and Gly234. The Glutamine amidotransferase type-1 domain occupies 185 to 376; that stretch reads NVALIDCGVK…FDNIEKYQLQ (192 aa). Cys264 functions as the Nucleophile in the catalytic mechanism. Residues Leu265, Gln268, Asn306, Gly308, and Tyr309 each coordinate L-glutamine. Residues His349 and Glu351 contribute to the active site.

Belongs to the CarA family. Heterodimer composed of 2 chains; the small (or glutamine) chain promotes the hydrolysis of glutamine to ammonia, which is used by the large (or ammonia) chain to synthesize carbamoyl phosphate.

Its subcellular location is the cytoplasm. It catalyses the reaction hydrogencarbonate + L-glutamine + 2 ATP + H2O = carbamoyl phosphate + L-glutamate + 2 ADP + phosphate + 2 H(+). The enzyme catalyses L-glutamine + H2O = L-glutamate + NH4(+). It participates in amino-acid biosynthesis; L-arginine biosynthesis; carbamoyl phosphate from bicarbonate: step 1/1. In terms of biological role, small subunit of the arginine-specific carbamoyl phosphate synthase (CPSase). CPSase catalyzes the formation of carbamoyl phosphate from the ammonia moiety of glutamine, carbonate, and phosphate donated by ATP, constituting the first step of 2 biosynthetic pathways, one leading to arginine and/or urea and the other to pyrimidine nucleotides. The small subunit (glutamine amidotransferase) binds and cleaves glutamine to supply the large subunit with the substrate ammonia. In Saccharomyces cerevisiae (strain ATCC 204508 / S288c) (Baker's yeast), this protein is Carbamoyl phosphate synthase arginine-specific small chain (CPA1).